The primary structure comprises 105 residues: Gastrin/cholecystokinin-like peptide (105 aa).

An N-terminal signal peptide occupies residues 1–20; the sequence is MKTKVFLGLILSAAVTACLC. Residues 21 to 38 constitute a propeptide that is removed on maturation; the sequence is RPAAKAPGGSHRPTSSLA. The tract at residues 24–51 is disordered; it reads AKAPGGSHRPTSSLARRDWPEPPSQEQQ. A Sulfotyrosine modification is found at tyrosine 87. Phenylalanine 93 is subject to Phenylalanine amide. The propeptide occupies 97–105; the sequence is STEDAADAA.

Belongs to the gastrin/cholecystokinin family.

It is found in the secreted. Its function is as follows. Potent stimulus of gastric acid, but not of pancreatic secretion. The sequence is that of Gastrin/cholecystokinin-like peptide from Gallus gallus (Chicken).